The primary structure comprises 385 residues: DNA double-strand break repair protein Mre11 (385 aa).

D14, H16, and D58 together coordinate Mn(2+). Catalysis depends on H94, which acts as the Proton donor. H180, H216, and H218 together coordinate Mn(2+).

This sequence belongs to the MRE11/RAD32 family. In terms of assembly, homodimer. Forms a heterotetramer composed of two Mre11 subunits and two Rad50 subunits. Homodimerization facilitates DNA binding. It depends on Mn(2+) as a cofactor.

With respect to regulation, nuclease activity is regulated by Rad50. The mirin-derivative PFM39, specifically inhibits the 3'-5' exonuclease activity. The N-alkylated mirin-derivatives PFM03 and PFM01 specifically inhibit the endonuclease activity. Part of the Rad50/Mre11 complex, which is involved in the early steps of DNA double-strand break (DSB) repair. The complex may facilitate opening of the processed DNA ends to aid in the recruitment of HerA and NurA. Mre11 binds to DSB ends and has both double-stranded 3'-5' exonuclease activity and single-stranded endonuclease activity. The polypeptide is DNA double-strand break repair protein Mre11 (Thermotoga maritima (strain ATCC 43589 / DSM 3109 / JCM 10099 / NBRC 100826 / MSB8)).